The chain runs to 2776 residues: Microtubule-associated protein 1A (2776 aa).

A phosphoserine mark is found at S114, S117, S118, S121, and S155. Y177 is modified (phosphotyrosine). Positions 310 to 331 (PSKIKHRADSKESLKAAPKTAM) are disordered. 2 positions are modified to phosphoserine: S319 and S322. Residues 336–338 (KRE) form repeat 1. An 11 X 3 AA approximate repeats of K-K-[DE] region spans residues 336-541 (KREEVLEEGA…TQDFEELKRE (206 aa)). The span at 345-390 (AKEARSELAKELAKSEKKAKEPSEKPPEKPSKPERVRTESSEALKA) shows a compositional bias: basic and acidic residues. 8 disordered regions span residues 345–678 (AKEA…KAES), 738–809 (TIPG…TELT), 846–1076 (EDQS…AGGQ), 1094–1210 (ETGE…ESLG), 1223–1651 (EKGP…SPEQ), 1685–1729 (DGQG…FKDF), 1744–1848 (LAES…APFS), and 1866–2648 (AELE…NGLK). S384 is subject to Phosphoserine. Positions 391 to 406 (EKRKLIKDKVGKKHLK) are enriched in basic residues. Composition is skewed to basic and acidic residues over residues 407-464 (EKIS…KPDL) and 484-500 (LKVD…ELSS). 9 consecutive repeat copies span residues 415–417 (KRD), 420–422 (KKE), 424–426 (KKE), 427–429 (RKE), 431–433 (KKE), 436–438 (RKE), 440–442 (KKD), 444–446 (KKD), and 449–451 (RKD). Residue T504 is modified to Phosphothreonine. Phosphoserine is present on residues S526 and S527. A compositionally biased stretch (basic and acidic residues) spans 536–556 (EELKREERGLLAEPRDTELGE). Repeat 11 spans residues 539–541 (KRE). Residues 567 to 579 (GRPSTAIQVTQPP) are compositionally biased toward polar residues. The segment covering 587 to 631 (QVEREKEVVPDFPEDKGSKNRAPDSGAEVEREKETWEERKPREAE) has biased composition (basic and acidic residues). Phosphoserine is present on residues S604 and S611. Position 633 is a phosphothreonine (T633). The segment covering 640 to 667 (AREESEPEVKEDVIEKAELEEMEEVHPS) has biased composition (basic and acidic residues). Phosphoserine is present on residues S644, S667, S678, and S786. Polar residues-rich tracts occupy residues 785 to 800 (ASQS…SSKT), 846 to 859 (EDQS…PQTE), and 870 to 882 (TVTS…TEAT). S873, S876, S877, and S890 each carry phosphoserine. T893 carries the post-translational modification Phosphothreonine. Phosphoserine occurs at positions 895, 899, and 908. Positions 944–954 (VTTSEKLSSQY) are enriched in polar residues. A phosphoserine mark is found at S981, S991, S999, S1008, S1014, S1023, and S1062. T1068 carries the post-translational modification Phosphothreonine. A compositionally biased stretch (low complexity) spans 1096 to 1105 (GEAGAASGAG). Residues 1112–1124 (RTQEPAEPQKDEL) are compositionally biased toward basic and acidic residues. Residues S1131, S1133, S1147, S1159, S1177, S1187, S1190, S1196, S1205, and S1208 each carry the phosphoserine modification. A compositionally biased stretch (polar residues) spans 1179 to 1189 (EDTQSLSFSEE). The span at 1197–1210 (LDISSKQLSPESLG) shows a compositional bias: polar residues. Basic and acidic residues predominate over residues 1223 to 1234 (EKGPLVKAEDNS). Phosphoserine occurs at positions 1251, 1289, 1310, 1313, and 1316. Positions 1302 to 1317 (TSDSSLTKSPESLSSP) are enriched in low complexity. Composition is skewed to basic and acidic residues over residues 1332–1350 (GSED…RKSE), 1370–1384 (SVMH…EENK), 1391–1435 (KTSE…KALE), 1449–1488 (PRAR…RAPE), 1499–1541 (RAPE…DQDN), and 1549–1599 (GTLK…EKTR). S1516, S1580, and S1606 each carry phosphoserine. The span at 1609-1625 (EEGKAREQEEKYWKEQD) shows a compositional bias: basic and acidic residues. Phosphoserine occurs at positions 1634 and 1648. Polar residues predominate over residues 1709 to 1718 (QEITPLQHTP). Residues S1720, S1747, S1762, S1768, and S1772 each carry the phosphoserine modification. Phosphothreonine is present on T1777. Residues S1783 and S1789 each carry the phosphoserine modification. A compositionally biased stretch (polar residues) spans 1794–1808 (TKSTPPTRNEPTTPS). Over residues 1823-1844 (LPPAPLSPAPAPPTPAPDPHAP) the composition is skewed to pro residues. Basic and acidic residues predominate over residues 1878 to 1890 (KDYRKAEGEREGE). S1902 bears the Phosphoserine mark. Composition is skewed to basic and acidic residues over residues 1907 to 1935 (EVTE…DERS) and 1972 to 1988 (STKE…EKEL). T1928 is modified (phosphothreonine). Positions 1990 to 2006 (SAVSPPNLHSDTPTFSY) are enriched in polar residues. S1993 carries the phosphoserine modification. Residues 2013 to 2039 (TIPPRQEPEPGPNVEPSFTPPAVPPRA) show a composition bias toward pro residues. T2031 carries the post-translational modification Phosphothreonine. Polar residues predominate over residues 2042 to 2058 (SLSQDPSPPLNGSTTSC). Residues S2048 and S2082 each carry the phosphoserine modification. Residues 2060–2096 (PDRRTPSPKEAGRSHWDDGTNDSDLEKGAREQPEKET) show a composition bias toward basic and acidic residues. Pro residues predominate over residues 2149–2158 (PAPPQLPSPA). A phosphoserine mark is found at S2209, S2226, S2230, S2233, and S2234. Polar residues predominate over residues 2231–2242 (EGSSSEATTPVI). A compositionally biased stretch (low complexity) spans 2279-2292 (PLSPAPLASRDLAP). Basic and acidic residues predominate over residues 2355-2367 (AEKEEAEALHAWE). At S2425 the chain carries Phosphoserine. The span at 2478–2490 (SASDSGSSQSDSD) shows a compositional bias: low complexity. The span at 2535-2551 (DPPPAPLPDPRPPPPRP) shows a compositional bias: pro residues. The segment covering 2566 to 2576 (GRVERLREKVQ) has biased composition (basic and acidic residues). S2623 and S2637 each carry phosphoserine.

It belongs to the MAP1 family. In terms of assembly, 3 different light chains, LC1 (a cleavage product of MAP1B), LC2 (a cleavage product of MAP1A) and LC3 (produced by one of the MAP1LC3 genes), can associate with the MAP1A or MAP1B heavy chains. Interacts with guanylate kinase-like domain of DLG1, DLG2 and DLG4. Binds to CSNK1D. Interacts with TIAM2. Interacts with ELAVL4. Post-translationally, phosphorylated by CSNK1D. In terms of processing, LC2 is generated from MAP1A by proteolytic processing. It is free to associate with both MAP1A and MAP1B. In terms of tissue distribution, both isoforms highly expressed in brain, and to a lesser extent in embryo. Isoform 1 is also expressed at a low level in other tissues including heart and muscle.

The protein localises to the cytoplasm. It is found in the cytoskeleton. In terms of biological role, structural protein involved in the filamentous cross-bridging between microtubules and other skeletal elements. This Mus musculus (Mouse) protein is Microtubule-associated protein 1A (Map1a).